The sequence spans 313 residues: Putative S-adenosyl-L-methionine-dependent methyltransferase MAP_3563 (313 aa).

S-adenosyl-L-methionine contacts are provided by residues aspartate 139 and 168-169 (DL).

The protein belongs to the UPF0677 family.

Functionally, exhibits S-adenosyl-L-methionine-dependent methyltransferase activity. In Mycolicibacterium paratuberculosis (strain ATCC BAA-968 / K-10) (Mycobacterium paratuberculosis), this protein is Putative S-adenosyl-L-methionine-dependent methyltransferase MAP_3563.